The sequence spans 884 residues: Bifunctional heparan sulfate N-deacetylase/N-sulfotransferase 2 (884 aa).

Over 1-18 the chain is Cytoplasmic; sequence MLKLWKVVRPARQLELHR. Residues 19 to 39 traverse the membrane as a helical; Signal-anchor for type II membrane protein segment; that stretch reads LILLLIAFSLGSMGFLAYYVS. Over 40-884 the chain is Lumenal; that stretch reads TSPKAKEPLP…REELQHSSSG (845 aa). The interval 41–598 is heparan sulfate N-deacetylase 2; sequence SPKAKEPLPL…KRHKDIWSKE (558 aa). The interval 49–82 is disordered; the sequence is PLPLGDCSSSGAAGGPGPVRPPVPPRPPRPPETA. Pro residues predominate over residues 66-79; it reads PVRPPVPPRPPRPP. Asn351 and Asn401 each carry an N-linked (GlcNAc...) asparagine glycan. A heparan sulfate N-sulfotransferase 2 region spans residues 599–884; sequence KTCDRLPKFL…REELQHSSSG (286 aa). The active-site For sulfotransferase activity is Lys614. 614–618 provides a ligand contact to 3'-phosphoadenylyl sulfate; that stretch reads KTGTT. The N-linked (GlcNAc...) asparagine glycan is linked to Asn667. Ser712 contacts 3'-phosphoadenylyl sulfate. Residues Asn727 and Asn803 are each glycosylated (N-linked (GlcNAc...) asparagine). A disulfide bridge links Cys818 with Cys828. Residue 833 to 837 coordinates 3'-phosphoadenylyl sulfate; it reads KGRKY.

The protein belongs to the sulfotransferase 1 family. NDST subfamily. As to quaternary structure, monomer.

The protein localises to the golgi apparatus membrane. The enzyme catalyses alpha-D-glucosaminyl-[heparan sulfate](n) + 3'-phosphoadenylyl sulfate = N-sulfo-alpha-D-glucosaminyl-[heparan sulfate](n) + adenosine 3',5'-bisphosphate + 2 H(+). It functions in the pathway glycan metabolism; heparan sulfate biosynthesis. Its pathway is glycan metabolism; heparin biosynthesis. Its function is as follows. Essential bifunctional enzyme that catalyzes both the N-deacetylation and the N-sulfation of glucosamine (GlcNAc) of the glycosaminoglycan in heparan sulfate. Modifies the GlcNAc-GlcA disaccharide repeating sugar backbone to make N-sulfated heparosan, a prerequisite substrate for later modifications in heparin biosynthesis. Plays a role in determining the extent and pattern of sulfation of heparan sulfate. Required for the exosomal release of SDCBP, CD63 and syndecan. The sequence is that of Bifunctional heparan sulfate N-deacetylase/N-sulfotransferase 2 (NDST2) from Bos taurus (Bovine).